Consider the following 138-residue polypeptide: Lymphocyte antigen 6L (138 aa).

Positions 1–16 (MERLVLTLCTLPLAVA) are cleaved as a signal peptide. Residue asparagine 27 is glycosylated (N-linked (GlcNAc...) asparagine). Positions 28-122 (LSCYQCFKVS…TPQEGRWALR (95 aa)) constitute a UPAR/Ly6 domain. 2 disulfide bridges follow: cysteine 30/cysteine 47 and cysteine 103/cysteine 108. Residue glycine 117 is the site of GPI-anchor amidated glycine attachment. Residues 118 to 138 (RWALRGGLLLQVGLSLLRALL) constitute a propeptide, removed in mature form.

The protein localises to the cell membrane. The protein is Lymphocyte antigen 6L of Homo sapiens (Human).